A 391-amino-acid chain; its full sequence is MASASFVKPNTLSSPWIGQRSFAHTSASSSPPPRVSFAIRAGAYSDELVKTAKSIASPGRGILAIDESNATCGKRLASIGLDNTEDNRQAYRQLLLTTPGLGDYISGSILFEETLYQSTKDGKTFVDCLRDANIVPGIKVDKGLSPLAGSNEESWCQGLDGLASRSAEYYKQGARFAKWRTVVSVPCGPSALAVKEAAWGLARYAAISQDNGLVPIVEPEILLDGDHPIERTLEVAEKVWSEVFFYLAQNNVMFEGILLKPSMVTPGAEHKNKASPETVADFTLTMLKRRVPPAVPGIMFLSGGQSEAEATLNLNAMNQSPNPWHVSFSYARALQNSVLRTWQGKPEKIEASQKALLVRAKANSLAQLGKYSAEGENEDAKKGMFVKGYTY.

A chloroplast-targeting transit peptide spans 1–40; sequence MASASFVKPNTLSSPWIGQRSFAHTSASSSPPPRVSFAIR. Arg88 is a binding site for substrate. Position 150 is a phosphoserine (Ser150). Lys178 serves as a coordination point for substrate. Ser208 is subject to Phosphoserine. The Proton acceptor role is filled by Glu218. Lys260 (schiff-base intermediate with dihydroxyacetone-P) is an active-site residue. 302-304 is a binding site for substrate; it reads SGG. Lys387 bears the N6,N6,N6-trimethyllysine mark.

It belongs to the class I fructose-bisphosphate aldolase family. Homotetramer. Post-translationally, can be trimethylated at Lys-387 by LSMT-L, but the trimethylation has no effect in vitro. In terms of processing, S-glutathionylated. As to expression, expressed in roots, and at low levels in rosettes leaves, cauline leaves, stems and flowers.

It is found in the plastid. Its subcellular location is the chloroplast. It localises to the plastoglobule. It carries out the reaction beta-D-fructose 1,6-bisphosphate = D-glyceraldehyde 3-phosphate + dihydroxyacetone phosphate. It participates in carbohydrate degradation; glycolysis; D-glyceraldehyde 3-phosphate and glycerone phosphate from D-glucose: step 4/4. Its function is as follows. Plays a key role in glycolysis and gluconeogenesis. The protein is Fructose-bisphosphate aldolase 3, chloroplastic of Arabidopsis thaliana (Mouse-ear cress).